The primary structure comprises 107 residues: MCIGIPMQVMAIEPGYAVCAGRGERRRVSSALVGDCQQGDWLLVFLDSARERIDALRAHEIDATLDMLQAALLGLDASEAQPRFELPSAMAREDLAVLSNSRDSSSY.

It belongs to the HupF/HypC family.

This Cupriavidus necator (strain ATCC 17699 / DSM 428 / KCTC 22496 / NCIMB 10442 / H16 / Stanier 337) (Ralstonia eutropha) protein is Hydrogenase expression/formation protein HoxL (hoxL).